We begin with the raw amino-acid sequence, 56 residues long: Large ribosomal subunit protein bL33c (56 aa).

The protein belongs to the bacterial ribosomal protein bL33 family.

The protein resides in the plastid. Its subcellular location is the chloroplast. This Guillardia theta (Cryptophyte) protein is Large ribosomal subunit protein bL33c (rpl33).